We begin with the raw amino-acid sequence, 401 residues long: MDQSGMEIPVTLIIKAPNQKYSDQTISCFLNWTVGKLKTHLSNVYPSKPLTKDQRLVYSGRLLPDHLQLKDILRKQDEYHMVHLVCASRSPPSSPKSSTDGESHGALASSTNSNSDHSDSTTPSPSQESLSLVAGSSEGLRHRTLPQAQTDPAQSHQFPYVIQGNVDHQFPGQGVPPGFPMYPAFSPLQMLWWQQMYAQQYYMQYQAAVTAQATSSASSAQHAASSPLNLAHVPGEEPPPAPNLVAQENGPENVQMNAQGGPVLNEEDFNRDWLDWVYTFSRAAVLLSIVYFYSSFSRFIMVMGAMLLVYLHQAGWFPFRQEGGQQQAPNNVDANNEGQNANNLELEEMRLMDDGLEDESGEDAGEDASAAQRPGLMASAWSFITTFFTSLIPEGPPQVAN.

Residues 10-89 form the Ubiquitin-like domain; the sequence is VTLIIKAPNQ…HMVHLVCASR (80 aa). Residues 87 to 137 are disordered; sequence ASRSPPSSPKSSTDGESHGALASSTNSNSDHSDSTTPSPSQESLSLVAGSS. Composition is skewed to low complexity over residues 88-98 and 109-126; these read SRSPPSSPKSS and SSTN…PSPS. Residues 299–319 form a helical membrane-spanning segment; it reads FIMVMGAMLLVYLHQAGWFPF.

Its subcellular location is the membrane. Could be involved in the unfolded protein response (UPR) pathway. In Rattus norvegicus (Rat), this protein is Homocysteine-responsive endoplasmic reticulum-resident ubiquitin-like domain member 2 protein (Herpud2).